The chain runs to 252 residues: Ribosomal RNA small subunit methyltransferase A (252 aa).

S-adenosyl-L-methionine contacts are provided by Asn10, Leu12, Gly36, Glu57, Asp81, and Asn98.

This sequence belongs to the class I-like SAM-binding methyltransferase superfamily. rRNA adenine N(6)-methyltransferase family. RsmA subfamily.

The protein localises to the cytoplasm. It catalyses the reaction adenosine(1518)/adenosine(1519) in 16S rRNA + 4 S-adenosyl-L-methionine = N(6)-dimethyladenosine(1518)/N(6)-dimethyladenosine(1519) in 16S rRNA + 4 S-adenosyl-L-homocysteine + 4 H(+). Specifically dimethylates two adjacent adenosines (A1518 and A1519) in the loop of a conserved hairpin near the 3'-end of 16S rRNA in the 30S particle. May play a critical role in biogenesis of 30S subunits. The protein is Ribosomal RNA small subunit methyltransferase A of Mycoplasmopsis pulmonis (strain UAB CTIP) (Mycoplasma pulmonis).